The following is a 255-amino-acid chain: Acetylglutamate kinase (255 aa).

Substrate is bound by residues 40–41, R62, and N153; that span reads GG.

It belongs to the acetylglutamate kinase family. ArgB subfamily.

The protein localises to the cytoplasm. The catalysed reaction is N-acetyl-L-glutamate + ATP = N-acetyl-L-glutamyl 5-phosphate + ADP. It functions in the pathway amino-acid biosynthesis; L-arginine biosynthesis; N(2)-acetyl-L-ornithine from L-glutamate: step 2/4. Functionally, catalyzes the ATP-dependent phosphorylation of N-acetyl-L-glutamate. This Bacillus cereus (strain ZK / E33L) protein is Acetylglutamate kinase.